We begin with the raw amino-acid sequence, 981 residues long: MALAVLRVLDPFPTETPPLAVLLPPGGPWPATGLGLVLALRPASESPAKPALLVAAVEGSGAQGEQRGPGPPPLLVSRALLRVLALGPGARVRARLVRRPPALGWALLATAPGPGLGPRVGPLLVRRGETLPVPGSRVLETRPALQGLLGPGTRLAVTELRGRAKLGQESRDHSHPPPPPVVSSFAASHSVRRLRGVLGGTGDALGVSRSCLRSLGLFQGEWVWVAQVAELPNSSQPRLAQVQVLEPRWELSERLGPNSGQQPGEPLADGLVFLPATLAFNLGCDPLEVGELRIQRYLEGSIAPENKGSCSPLPGPPFARELHIEILSSPHYSANGNYDHVLYRHFQTPRVVQEGDVLCVSTAGQVEILEGSLERLPRWREMFFKVKKTVGEAPEGPASAFLADTTHTSLYLAGTALSHVPSLPSGRSPPWDSLSPPGLEALVNELCAILKPHLQPGGTLLTGTSCVLLQGPPGSGKTTAVTAACSRLGLHLLKVPCSSLCADSSRAVETKLQATFSRARRCRPAVLLLTAVDLLGRDRDGLGEDARVAATLRHLLLDEDALSRCPPLMVVATTSRVQDLPTDVQTAFPHELEVPVLSEAQRLSILQALTAHLPLGQEVNLPQLARRCAGFVVGDLYALLTHTCRAACTRIRASGSAGGLSEEDEGDLCVAGFPLLAEDFGQALDQLQTAHSQAVGAPRIPSVSWHDVGGLQDVKKEILETIQLPLEHPELLSLGLRRSGLLLHGPPGTGKTLLAKAVATECSLTFLSVKGPELINMYVGQSEENVREVFARARAAAPCIIFFDELDSLAPSRGRSGDSGGVMDRVVSQLLAELDGLHSTQDVFVIGATNRPDLLDPALLRPGRFDKLVFVGASEDRASQLRVLSAITRKFKLEASVSLANVLDCCPPQLTGADLYSLCSDAMMTALKRRVRDLEEGLELRSSALLLTMEDLLQAAARLQPSVSEQELLRYKRIQRKFAAC.

Position 119 is an omega-N-methylarginine (Arg-119). ATP is bound by residues 471–478 (GPPGSGKT) and 745–752 (GPPGTGKT).

This sequence belongs to the AAA ATPase family. Interacts with PEX1; forming the PEX1-PEX6 AAA ATPase complex, which is composed of a heterohexamer formed by a trimer of PEX1-PEX6 dimers. Interacts with PEX26; interaction is direct and promotes recruitment to peroxisomal membranes. Interacts with ZFAND6. In the teeth, expressed in ameloblasts and odontoblasts. Expressed in the retina, at higher levels in the ganglion cell layer and photoreceptor layer at the joint between the outer and inner segments.

It is found in the cytoplasm. The protein localises to the cytosol. It localises to the peroxisome membrane. Its subcellular location is the cell projection. The protein resides in the cilium. It is found in the photoreceptor outer segment. It carries out the reaction ATP + H2O = ADP + phosphate + H(+). Its function is as follows. Component of the PEX1-PEX6 AAA ATPase complex, a protein dislocase complex that mediates the ATP-dependent extraction of the PEX5 receptor from peroxisomal membranes, an essential step for PEX5 recycling. Specifically recognizes PEX5 monoubiquitinated at 'Cys-11', and pulls it out of the peroxisome lumen through the PEX2-PEX10-PEX12 retrotranslocation channel. Extraction by the PEX1-PEX6 AAA ATPase complex is accompanied by unfolding of the TPR repeats and release of bound cargo from PEX5. The chain is Peroxisomal ATPase PEX6 from Mus musculus (Mouse).